Reading from the N-terminus, the 457-residue chain is D-hydantoinase (457 aa).

The Zn(2+) site is built by His-57 and His-59. Phosphoserine is present on Ser-69. Lys-148 provides a ligand contact to Zn(2+). Residue Lys-148 is modified to N6-carboxylysine. A substrate-binding site is contributed by Tyr-153. His-181 and His-237 together coordinate Zn(2+). Position 286 (Thr-286) interacts with substrate. Asp-313 contributes to the Zn(2+) binding site. Asn-335 contributes to the substrate binding site.

It belongs to the metallo-dependent hydrolases superfamily. Hydantoinase/dihydropyrimidinase family. In terms of assembly, homotetramer. Zn(2+) is required as a cofactor. Carboxylation allows a single lysine to coordinate two zinc ions.

Functionally, catalyzes the stereospecific hydrolysis of the cyclic amide bond of D-hydantoin derivatives. The sequence is that of D-hydantoinase (hyuA) from Rhizobium radiobacter (Agrobacterium tumefaciens).